Consider the following 484-residue polypeptide: Glutamate--tRNA ligase (484 aa).

The 'HIGH' region signature appears at 11-21 (PSPTGLLHIGN). The short motif at 255 to 259 (KLSKR) is the 'KMSKS' region element. Lys258 contributes to the ATP binding site.

This sequence belongs to the class-I aminoacyl-tRNA synthetase family. Glutamate--tRNA ligase type 1 subfamily. Monomer.

Its subcellular location is the cytoplasm. It carries out the reaction tRNA(Glu) + L-glutamate + ATP = L-glutamyl-tRNA(Glu) + AMP + diphosphate. Functionally, catalyzes the attachment of glutamate to tRNA(Glu) in a two-step reaction: glutamate is first activated by ATP to form Glu-AMP and then transferred to the acceptor end of tRNA(Glu). This is Glutamate--tRNA ligase from Streptococcus agalactiae serotype III (strain NEM316).